The following is a 349-amino-acid chain: Fructose-1,6-bisphosphatase class 1 (349 aa).

Mg(2+) contacts are provided by Glu113, Asp135, Ile137, and Asp138. Substrate is bound by residues 138 to 141, Asn230, Tyr258, and Lys288; that span reads DGSS. Mg(2+) is bound at residue Glu294.

Belongs to the FBPase class 1 family. In terms of assembly, homotetramer. It depends on Mg(2+) as a cofactor.

The protein localises to the cytoplasm. The enzyme catalyses beta-D-fructose 1,6-bisphosphate + H2O = beta-D-fructose 6-phosphate + phosphate. It functions in the pathway carbohydrate biosynthesis; Calvin cycle. The polypeptide is Fructose-1,6-bisphosphatase class 1 (Nostoc punctiforme (strain ATCC 29133 / PCC 73102)).